The following is a 336-amino-acid chain: Ribosomal RNA large subunit methyltransferase F (336 aa).

Basic residues predominate over residues 212 to 231; that stretch reads HHLERSRGKPTGKGVRRVRS. The segment at 212–234 is disordered; the sequence is HHLERSRGKPTGKGVRRVRSGRM.

It belongs to the methyltransferase superfamily. METTL16/RlmF family.

The protein localises to the cytoplasm. It catalyses the reaction adenosine(1618) in 23S rRNA + S-adenosyl-L-methionine = N(6)-methyladenosine(1618) in 23S rRNA + S-adenosyl-L-homocysteine + H(+). Its function is as follows. Specifically methylates the adenine in position 1618 of 23S rRNA. The protein is Ribosomal RNA large subunit methyltransferase F of Methylobacillus flagellatus (strain ATCC 51484 / DSM 6875 / VKM B-1610 / KT).